We begin with the raw amino-acid sequence, 229 residues long: Probable septum site-determining protein MinC (229 aa).

Belongs to the MinC family. As to quaternary structure, interacts with MinD and FtsZ.

In terms of biological role, cell division inhibitor that blocks the formation of polar Z ring septums. Rapidly oscillates between the poles of the cell to destabilize FtsZ filaments that have formed before they mature into polar Z rings. Prevents FtsZ polymerization. The chain is Probable septum site-determining protein MinC from Ruminiclostridium cellulolyticum (strain ATCC 35319 / DSM 5812 / JCM 6584 / H10) (Clostridium cellulolyticum).